We begin with the raw amino-acid sequence, 199 residues long: Transmembrane protein 223 (199 aa).

At 1-43 (MVASVPLRNVSHLLSVLRSQNVPRYLQNGVPRDVLLFRHERGR) the chain is on the mitochondrial matrix side. The chain crosses the membrane as a helical span at residues 44–64 (FFAILGLFCAGQGIFWTSLAV). At 65–94 (AALSRPLSRVPAEAPNRSYQDLRSALWRYG) the chain is on the mitochondrial intermembrane side. The helical transmembrane segment at 95–115 (LAVGCGTMGVLVLGAGLLYSL) threads the bilayer. Residues 116-199 (RSVRSVMLLA…DNTVGAYRSL (84 aa)) are Mitochondrial matrix-facing.

Belongs to the TMEM223 family. Associates with the mitochondrial ribosome.

It is found in the mitochondrion inner membrane. Its function is as follows. Mitochondrial ribosome-associated protein involved in the first steps of cytochrome c oxidase complex (complex IV) biogenesis. Stimulates the translation of MT-CO1 mRNA and is a constituent of early MT-CO1 assembly intermediates. This is Transmembrane protein 223 from Mus musculus (Mouse).